The following is a 972-amino-acid chain: Mast/stem cell growth factor receptor Kit (972 aa).

Positions 1-25 (MRGARRAWDFLFVLQLLLRVQTGSS) are cleaved as a signal peptide. Over 26-520 (QPSVSPEELS…QIHAHTLFTP (495 aa)) the chain is Extracellular. Ig-like C2-type domains follow at residues 27–112 (PSVS…VFVR), 121–205 (DPPL…LKVR), 212–308 (PVVA…LEVV), 317–410 (PMMN…VYVN), and 413–507 (PEIL…FNFA). Intrachain disulfides connect C58–C97, C136–C186, C151–C183, and C233–C290. Residues N94 and N145 are each glycosylated (N-linked (GlcNAc...) asparagine). N-linked (GlcNAc...) asparagine glycans are attached at residues N283, N293, N300, N320, N352, N367, N400, N463, and N486. Residues C428 and C491 are joined by a disulfide bond. Residues 521 to 541 (LLIGFVIAAGMMCIIVMILTY) form a helical membrane-spanning segment. Residues 542–972 (KYLQKPMYEV…TQPLLVHEDV (431 aa)) are Cytoplasmic-facing. 4 positions are modified to phosphotyrosine; by autocatalysis: Y543, Y549, Y564, and Y566. Residue Y564 coordinates Mg(2+). Residues 564–566 (YVY) are important for interaction with phosphotyrosine-binding proteins. The Protein kinase domain occupies 585 to 933 (LSFGKTLGAG…ISESTNHIYS (349 aa)). ATP is bound by residues 592-599 (GAGAFGKV), K619, and 667-673 (EYCCYGD). Y699, Y717, and Y726 each carry phosphotyrosine; by autocatalysis. Phosphoserine; by PKC/PRKCA is present on residues S737 and S742. D788 serves as the catalytic Proton acceptor. R792 serves as a coordination point for ATP. Positions 793 and 806 each coordinate Mg(2+). S817 bears the Phosphoserine mark. The residue at position 819 (Y819) is a Phosphotyrosine; by autocatalysis. At S887 the chain carries Phosphoserine. Residues Y896 and Y932 each carry the phosphotyrosine; by autocatalysis modification. Position 955 is a phosphoserine (S955).

This sequence belongs to the protein kinase superfamily. Tyr protein kinase family. CSF-1/PDGF receptor subfamily. In terms of assembly, monomer in the absence of bound KITLG/SCF. Homodimer in the presence of bound KITLG/SCF, forming a heterotetramer with two KITLG/SCF molecules. Interacts (via phosphorylated tyrosine residues) with the adapter proteins GRB2 and GRB7 (via SH2 domain), and SH2B2/APS. Interacts (via C-terminus) with MPDZ (via the tenth PDZ domain). Interacts (via phosphorylated tyrosine residues) with PIK3R1 and PIK3 catalytic subunit. Interacts (via phosphorylated tyrosine) with CRK (isoform Crk-II), FYN, SHC1 and MATK/CHK (via SH2 domain). Interacts with LYN and FES/FPS. Interacts (via phosphorylated tyrosine residues) with the protein phosphatases PTPN6/SHP-1 (via SH2 domain), PTPN11/SHP-2 (via SH2 domain) and PTPRU. Interacts with PLCG1. Interacts with DOK1 and TEC. Interacts with IL1RAP (independent of stimulation with KITLG/SCF). A mast cell-specific KITLG/SCF-induced interleukin-33 signaling complex contains IL1RL1, IL1RAP, KIT and MYD88. In terms of processing, ubiquitinated by SOCS6. KIT is rapidly ubiquitinated after autophosphorylation induced by KITLG/SCF binding, leading to internalization and degradation. Autophosphorylated on tyrosine residues. KITLG/SCF binding promotes autophosphorylation. Phosphorylated tyrosine residues are important for interaction with specific binding partners.

It localises to the cell membrane. The catalysed reaction is L-tyrosyl-[protein] + ATP = O-phospho-L-tyrosyl-[protein] + ADP + H(+). Present in an inactive conformation in the absence of bound ligand. KITLG/SCF binding leads to dimerization and activation by autophosphorylation on tyrosine residues. Activity is down-regulated by PRKCA-mediated phosphorylation on serine residues. Tyrosine-protein kinase that acts as a cell-surface receptor for the cytokine KITLG/SCF and plays an essential role in the regulation of cell survival and proliferation, hematopoiesis, stem cell maintenance, gametogenesis, mast cell development, migration and function, and in melanogenesis. In response to KITLG/SCF binding, KIT can activate several signaling pathways. Phosphorylates PIK3R1, PLCG1, SH2B2/APS and CBL. Activates the AKT1 signaling pathway by phosphorylation of PIK3R1, the regulatory subunit of phosphatidylinositol 3-kinase. Activated KIT also transmits signals via GRB2 and activation of RAS, RAF1 and the MAP kinases MAPK1/ERK2 and/or MAPK3/ERK1. Promotes activation of STAT family members STAT1, STAT3, STAT5A and STAT5B. Activation of PLCG1 leads to the production of the cellular signaling molecules diacylglycerol and inositol 1,4,5-trisphosphate. KIT signaling is modulated by protein phosphatases, and by rapid internalization and degradation of the receptor. Activated KIT promotes phosphorylation of the protein phosphatases PTPN6/SHP-1 and PTPRU, and of the transcription factors STAT1, STAT3, STAT5A and STAT5B. Promotes phosphorylation of PIK3R1, CBL, CRK (isoform Crk-II), LYN, MAPK1/ERK2 and/or MAPK3/ERK1, PLCG1, SRC and SHC1. This is Mast/stem cell growth factor receptor Kit (KIT) from Sus scrofa (Pig).